Here is a 438-residue protein sequence, read N- to C-terminus: Coenzyme A disulfide reductase (438 aa).

Residue 8-33 (GAVAGGATCASQIRRLDKESDIIIFE) coordinates FAD. 5 residues coordinate substrate: Thr15, Gln19, Arg22, Ser39, and Asn42. Catalysis depends on Cys43, which acts as the Nucleophile. Cys43 (redox-active) is an active-site residue. Lys71 is a binding site for substrate. 151 to 166 (VLVVGAGYVSLEVLEN) is a binding site for NADP(+). 267–277 (TNVPNIYVIGD) contacts FAD. His299 lines the substrate pocket. FAD is bound at residue Tyr419. Lys427 serves as a coordination point for substrate.

It belongs to the class-III pyridine nucleotide-disulfide oxidoreductase family. Homodimer. It depends on FAD as a cofactor.

The catalysed reaction is NADP(+) + 2 CoA = CoA-disulfide + NADPH + H(+). In terms of biological role, catalyzes specifically the NADPH-dependent reduction of coenzyme A disulfide. The polypeptide is Coenzyme A disulfide reductase (Staphylococcus aureus (strain MRSA252)).